Reading from the N-terminus, the 154-residue chain is Egg-lysin (154 aa).

The N-terminal stretch at Met-1–Ser-18 is a signal peptide.

In terms of assembly, homodimer. In terms of tissue distribution, sperm.

Its function is as follows. Dissolves the egg vitelline layer nonenzymatically during fertilization. It creates a hole of about 3 mu-m in diameter through which the sperm pass. In Haliotis sorenseni (White abalone), this protein is Egg-lysin.